Consider the following 105-residue polypeptide: DNA-directed RNA polymerase subunit omega (105 aa).

This sequence belongs to the RNA polymerase subunit omega family. As to quaternary structure, the RNAP catalytic core consists of 2 alpha, 1 beta, 1 beta' and 1 omega subunit. When a sigma factor is associated with the core the holoenzyme is formed, which can initiate transcription.

The enzyme catalyses RNA(n) + a ribonucleoside 5'-triphosphate = RNA(n+1) + diphosphate. Its function is as follows. Promotes RNA polymerase assembly. Latches the N- and C-terminal regions of the beta' subunit thereby facilitating its interaction with the beta and alpha subunits. In Streptococcus equi subsp. zooepidemicus (strain MGCS10565), this protein is DNA-directed RNA polymerase subunit omega.